The primary structure comprises 321 residues: Biotin synthase (321 aa).

In terms of domain architecture, Radical SAM core spans 45 to 271; the sequence is YYGKKVKLNM…INPTKEIRIA (227 aa). [4Fe-4S] cluster is bound by residues Cys-63, Cys-67, and Cys-70. Residues Cys-106, Cys-139, Cys-199, and Arg-269 each contribute to the [2Fe-2S] cluster site.

This sequence belongs to the radical SAM superfamily. Biotin synthase family. As to quaternary structure, homodimer. The cofactor is [4Fe-4S] cluster. It depends on [2Fe-2S] cluster as a cofactor.

The catalysed reaction is (4R,5S)-dethiobiotin + (sulfur carrier)-SH + 2 reduced [2Fe-2S]-[ferredoxin] + 2 S-adenosyl-L-methionine = (sulfur carrier)-H + biotin + 2 5'-deoxyadenosine + 2 L-methionine + 2 oxidized [2Fe-2S]-[ferredoxin]. The protein operates within cofactor biosynthesis; biotin biosynthesis; biotin from 7,8-diaminononanoate: step 2/2. Its function is as follows. Catalyzes the conversion of dethiobiotin (DTB) to biotin by the insertion of a sulfur atom into dethiobiotin via a radical-based mechanism. The polypeptide is Biotin synthase (Staphylococcus epidermidis (strain ATCC 35984 / DSM 28319 / BCRC 17069 / CCUG 31568 / BM 3577 / RP62A)).